The following is a 485-amino-acid chain: Terminase, large subunit (485 aa).

ADP is bound by residues 17–22, 40–45, and Arg79; these read KPHHVQ and QSGKSE. Residues 22–197 are ATPase activity; sequence QLAIHRSTAK…EFFLMGWRGG (176 aa). ATP is bound by residues Gln97 and Gln99. A Walker A motif motif is present at residues 125–131; it reads SEFRGKS. The Walker B motif signature appears at 145-150; the sequence is FVILDE. Glu150 (for ATPase activity) is an active-site residue. Residues 256-438 form a nuclease region; that stretch reads SNSVFSGLDM…DIVMSLALAY (183 aa). Mg(2+) is bound by residues Asp294, Asp347, and Asp429.

This sequence belongs to the Tequatrovirus large terminase family. As to quaternary structure, interacts with the terminase small subunit; the active complex is composed of a pentamer of terminase large subunits and a dodecamer of terminase small subunits. Interacts with the portal protein. It depends on Mg(2+) as a cofactor.

Functionally, the terminase large subunit acts as an ATP driven molecular motor necessary for viral DNA translocation into empty capsids and as an endonuclease that cuts the viral genome to initiate and to end a packaging reaction The terminase lies at a unique vertex of the procapsid and is composed of two subunits, a small terminase subunit involved in viral DNA recognition (packaging sequence), and a large terminase subunit possessing endonucleolytic and ATPase activities. Both terminase subunits heterooligomerize and are docked on the portal protein to form the packaging machine. The terminase large subunit exhibits endonuclease activity and cleaves the viral genome concatemer. Once the capsid is packaged with the DNA, the terminase complex is substituted by the tail. The chain is Terminase, large subunit from Thermus thermophilus (Thermus thermophilus phage P23-45).